The following is a 137-amino-acid chain: Basic phospholipase A2 homolog Pgo-K49 (137 aa).

An N-terminal signal peptide occupies residues 1–16 (MRTLLIVAVLLVGVEG). 7 disulfide bridges follow: cysteine 42-cysteine 131, cysteine 44-cysteine 60, cysteine 59-cysteine 111, cysteine 65-cysteine 137, cysteine 66-cysteine 104, cysteine 73-cysteine 97, and cysteine 91-cysteine 102. Positions 121–133 (KKYKIHMKFFCKK) are important for membrane-damaging activities in eukaryotes and bacteria; heparin-binding.

In terms of tissue distribution, expressed by the venom gland.

The protein localises to the secreted. Snake venom phospholipase A2 homolog that lacks enzymatic activity. Is myotoxic. A model of myotoxic mechanism has been proposed: an apo Lys49-PLA2 is activated by the entrance of a hydrophobic molecule (e.g. fatty acid) at the hydrophobic channel of the protein leading to a reorientation of a monomer. This reorientation causes a transition between 'inactive' to 'active' states, causing alignment of C-terminal and membrane-docking sites (MDoS) side-by-side and putting the membrane-disruption sites (MDiS) in the same plane, exposed to solvent and in a symmetric position for both monomers. The MDoS region stabilizes the toxin on membrane by the interaction of charged residues with phospholipid head groups. Subsequently, the MDiS region destabilizes the membrane with penetration of hydrophobic residues. This insertion causes a disorganization of the membrane, allowing an uncontrolled influx of ions (i.e. calcium and sodium), and eventually triggering irreversible intracellular alterations and cell death. This chain is Basic phospholipase A2 homolog Pgo-K49, found in Cerrophidion godmani (Porthidium godmani).